A 354-amino-acid polypeptide reads, in one-letter code: Fructose-bisphosphate aldolase (354 aa).

A D-glyceraldehyde 3-phosphate-binding site is contributed by Ser-61. Asp-104 functions as the Proton donor in the catalytic mechanism. Zn(2+) is bound by residues His-105, Asp-139, Glu-169, and His-221. Gly-222 contributes to the dihydroxyacetone phosphate binding site. Residue His-260 coordinates Zn(2+). Dihydroxyacetone phosphate-binding positions include 261 to 263 (GGS) and 282 to 285 (NIDT).

The protein belongs to the class II fructose-bisphosphate aldolase family. Homodimer. Zn(2+) is required as a cofactor.

It carries out the reaction beta-D-fructose 1,6-bisphosphate = D-glyceraldehyde 3-phosphate + dihydroxyacetone phosphate. The protein operates within carbohydrate degradation; glycolysis; D-glyceraldehyde 3-phosphate and glycerone phosphate from D-glucose: step 4/4. Its function is as follows. Catalyzes the aldol condensation of dihydroxyacetone phosphate (DHAP or glycerone-phosphate) with glyceraldehyde 3-phosphate (G3P) to form fructose 1,6-bisphosphate (FBP) in gluconeogenesis and the reverse reaction in glycolysis. The sequence is that of Fructose-bisphosphate aldolase (fba) from Campylobacter jejuni subsp. jejuni serotype O:2 (strain ATCC 700819 / NCTC 11168).